The following is a 469-amino-acid chain: Protein RUFY3 (469 aa).

A phosphothreonine mark is found at Thr5 and Thr12. Phosphoserine occurs at positions 34 and 49. Residue Thr51 is modified to Phosphothreonine. In terms of domain architecture, RUN spans 95 to 227 (DSDYAPLQQF…IDANFCMKGE (133 aa)). 2 coiled-coil regions span residues 271-362 (NRHL…VEKE) and 422-463 (KSEL…AANK).

As to quaternary structure, interacts with PAK1. Interacts (via C-terminus) with Ras-related Rab-5 proteins. Interacts (via C-terminus) with Ras-related Rap-2 proteins. Interacts with PIK3CA and PIK3R1. Interacts (via N-terminus) with FSCN1; this interaction induces neuron axon development. Interacts with DBN1. Interacts (via the second coiled coil) with GTP-, but not GDP-bound ARL8A and ARL8B. Interacts with dynactin/DCTN1 and the dynein intermediate chain DYNC1I1/2. Directly interacts with DYNC1LI1. Phosphorylated by PAK1.

Its subcellular location is the cytoplasm. It localises to the endomembrane system. It is found in the cell projection. The protein resides in the invadopodium. The protein localises to the growth cone. Its subcellular location is the perikaryon. It localises to the filopodium. It is found in the lamellipodium. The protein resides in the lysosome. ARL8 effector that promotes the coupling of endolysosomes to dynein-dynactin for retrograde transport along microtubules. Acts by binding both GTP-bound ARL8 and dynein-dynactin. In nonneuronal cells, promotes concentration of endolysosomes in the juxtanuclear area. In hippocampal neurons, drives retrograde transport of endolysosomes from the axon to the soma. Plays a role in the generation of neuronal polarity formation and axon growth. Implicated in the formation of a single axon by developing neurons. May inhibit the formation of additional axons by inhibition of PI3K in minor neuronal processes. Plays a role in the formation of F-actin-enriched protrusive structures at the cell periphery. Plays a role in cytoskeletal organization by regulating the subcellular localization of FSCN1 and DBN1 at axonal growth cones. This Pongo abelii (Sumatran orangutan) protein is Protein RUFY3.